The following is a 61-amino-acid chain: MIPVRCFSCGKVISSVWEEYRERIKSEPPGKVMDDLGIERYCCRRMLLSHVEVVEMLRRYQ.

Zn(2+)-binding residues include cysteine 6, cysteine 9, cysteine 42, and cysteine 43.

The protein belongs to the archaeal Rpo10/eukaryotic RPB10 RNA polymerase subunit family. As to quaternary structure, part of the RNA polymerase complex. The cofactor is Zn(2+).

The protein localises to the cytoplasm. It catalyses the reaction RNA(n) + a ribonucleoside 5'-triphosphate = RNA(n+1) + diphosphate. DNA-dependent RNA polymerase (RNAP) catalyzes the transcription of DNA into RNA using the four ribonucleoside triphosphates as substrates. The polypeptide is DNA-directed RNA polymerase subunit Rpo10 (Methanothrix thermoacetophila (strain DSM 6194 / JCM 14653 / NBRC 101360 / PT) (Methanosaeta thermophila)).